Here is a 133-residue protein sequence, read N- to C-terminus: Small ribosomal subunit protein bS16 (133 aa).

Residues 83–101 (KRDARSNPKKAEPGKKAQE) show a composition bias toward basic and acidic residues. The segment at 83–102 (KRDARSNPKKAEPGKKAQER) is disordered.

Belongs to the bacterial ribosomal protein bS16 family.

The protein is Small ribosomal subunit protein bS16 of Mesorhizobium japonicum (strain LMG 29417 / CECT 9101 / MAFF 303099) (Mesorhizobium loti (strain MAFF 303099)).